Reading from the N-terminus, the 410-residue chain is Killer cell immunoglobulin-like receptor 3DL3 (410 aa).

An N-terminal signal peptide occupies residues 1 to 25; that stretch reads MSLMVVSMACVGFFLLEGPWPHVGG. At 26-322 the chain is on the extracellular side; sequence QDKPFLSAWP…VSVTGNSRHL (297 aa). 3 Ig-like C2-type domains span residues 42–97, 137–197, and 237–295; these read GQHV…RCCS, GETV…RCFG, and GENV…RCFG. 2 cysteine pairs are disulfide-bonded: C49–C95 and C144–C195. N-linked (GlcNAc...) asparagine glycosylation is found at N179, N239, and N273. Residues C244 and C293 are joined by a disulfide bond. The chain crosses the membrane as a helical span at residues 323–343; it reads HVLIGTSVVIIPFAILLFFLL. Residues 344–410 lie on the Cytoplasmic side of the membrane; that stretch reads HRWCANKKNA…PKTPPTDTSV (67 aa).

Belongs to the immunoglobulin superfamily.

It is found in the cell membrane. Functionally, receptor on natural killer cells. May inhibit the activity of NK cells thus preventing cell lysis. In Homo sapiens (Human), this protein is Killer cell immunoglobulin-like receptor 3DL3 (KIR3DL3).